We begin with the raw amino-acid sequence, 65 residues long: Large ribosomal subunit protein uL30 (65 aa).

The protein belongs to the universal ribosomal protein uL30 family. In terms of assembly, part of the 50S ribosomal subunit.

This is Large ribosomal subunit protein uL30 from Methylobacillus flagellatus (strain ATCC 51484 / DSM 6875 / VKM B-1610 / KT).